A 406-amino-acid chain; its full sequence is Elongation factor Ts, mitochondrial (406 aa).

The segment at 387-406 (ARPSDETSFADQVKEAAGLA) is disordered.

It belongs to the EF-Ts family.

It is found in the mitochondrion. Functionally, associates with the EF-Tu.GDP complex and induces the exchange of GDP to GTP. It remains bound to the aminoacyl-tRNA.EF-Tu.GTP complex up to the GTP hydrolysis stage on the ribosome. This Malassezia globosa (strain ATCC MYA-4612 / CBS 7966) (Dandruff-associated fungus) protein is Elongation factor Ts, mitochondrial.